We begin with the raw amino-acid sequence, 448 residues long: MFIEQMFPFINESVRVHQLPEGGVLEIDYLRDNVSISDFEYLDLNKTAYELCMRMDGQKTAEQILAEQCAVYDESPEDHKDWYYDMLNMLQNKQVIQLGNRASRHTITTSGSNEFPMPLHATFELTHRCNLKCAHCYLESSPEALGTVSIEQFKKTADMLFDNGVLTCEITGGEIFVHPNANEILDYVCKKFKKVAVLTNGTLMRKESLELLKTYKQKIIVGISLDSVNSEVHDSFRGRKGSFAQTCKTIKLLSDHGIFVRVAMSVFEKNMWEIHDMAQKVRDLGAKAFSYNWVDDFGRGRDIVHPTKDAEQHRKFMEYEQHVIDEFKDLIPIIPYERKRAANCGAGWKSIVISPFGEVRPCALFPKEFSLGNIFHDSYESIFNSPLVHKLWQAQAPRFSEHCMKDKCPFSGYCGGCYLKGLNSNKYHRKNICSWAKNEQLEDVVQLI.

The 215-residue stretch at 115–329 (FPMPLHATFE…EQHVIDEFKD (215 aa)) folds into the Radical SAM core domain. Residues Cys-129, Cys-133, Cys-136, Cys-408, Cys-414, and Cys-417 each contribute to the [4Fe-4S] cluster site.

Requires [4Fe-4S] cluster as cofactor.

Its subcellular location is the cytoplasm. In terms of biological role, catalyzes the formation of 3 thioether bonds during production of the sactipeptide subtilosin from SboA. In vitro the thioether bonds cannot be made in the absence of the SboA propeptide, suggesting this is the first reaction in subtilosin maturation. In vitro, in the absence of a second substrate, cleaves S-adenosyl-L-methionine into Met and 5'-dA. In Bacillus subtilis (strain 168), this protein is Antilisterial bacteriocin subtilosin biosynthesis protein AlbA (albA).